Consider the following 326-residue polypeptide: Glutaredoxin 3 (326 aa).

The Thioredoxin domain maps to 1–108; sequence MANFTDAASL…LTNKVQRLGS (108 aa). Glutaredoxin domains lie at 125–227 and 227–326; these read NQRL…VSLE and ENRL…KGEN. 2 residues coordinate [2Fe-2S] cluster: cysteine 150 and cysteine 252.

Homodimer; the homodimer is independent of 2Fe-2S clusters. Heterotrimer; forms a heterotrimeric complex composed by two bola2 molecules and one glrx3 molecule; linked by [2Fe-2S] clusters.

It is found in the cytoplasm. The protein localises to the cytosol. Its function is as follows. Together with bola2, acts as a cytosolic iron-sulfur (Fe-S) cluster assembly factor that facilitates [2Fe-2S] cluster insertion into a subset of cytosolic proteins. Required for hemoglobin maturation. Does not possess any thyoredoxin activity since it lacks the conserved motif that is essential for catalytic activity. In Danio rerio (Zebrafish), this protein is Glutaredoxin 3 (glrx3).